The sequence spans 142 residues: Transcriptional regulator MraZ (142 aa).

2 SpoVT-AbrB domains span residues 5 to 47 (EFQH…PQHE) and 76 to 119 (ATEC…SKEE).

Belongs to the MraZ family. As to quaternary structure, forms oligomers.

It localises to the cytoplasm. The protein localises to the nucleoid. The protein is Transcriptional regulator MraZ of Desulforamulus reducens (strain ATCC BAA-1160 / DSM 100696 / MI-1) (Desulfotomaculum reducens).